Reading from the N-terminus, the 155-residue chain is MRRKAASKRLTLTDQRFNDEIIYRLINAVMIDGKKSVATKVVYDAMDIVGEKSEESALDVFHKAMTNISPVVEVRGKRVGGATYQIPMEVRAERRVALALRWLKKYSESRSGKSMATRLAAEILDASNSQGSAVKKREEVHKMAEANKAFSHFRF.

The protein belongs to the universal ribosomal protein uS7 family. As to quaternary structure, part of the 30S ribosomal subunit. Contacts proteins S9 and S11.

Its function is as follows. One of the primary rRNA binding proteins, it binds directly to 16S rRNA where it nucleates assembly of the head domain of the 30S subunit. Is located at the subunit interface close to the decoding center, probably blocks exit of the E-site tRNA. The chain is Small ribosomal subunit protein uS7 from Chloroherpeton thalassium (strain ATCC 35110 / GB-78).